The primary structure comprises 200 residues: Large ribosomal subunit protein uL18 (200 aa).

The protein belongs to the universal ribosomal protein uL18 family. In terms of assembly, part of the 50S ribosomal subunit. Contacts the 5S and 23S rRNAs.

Its function is as follows. This is one of the proteins that bind and probably mediate the attachment of the 5S RNA into the large ribosomal subunit, where it forms part of the central protuberance. This is Large ribosomal subunit protein uL18 from Thermococcus sibiricus (strain DSM 12597 / MM 739).